Reading from the N-terminus, the 310-residue chain is Homeobox protein dsc-1 (310 aa).

The homeobox DNA-binding region spans R180–E239. The interval C262–Q310 is disordered. Polar residues predominate over residues G281–Q298.

As to expression, expressed in the bilateral sensory neurons AWA, AWB, AWC, ASE, FLP and PVD. Also expressed in the enteric intestinal and anal depressor muscles.

The protein resides in the nucleus. Its subcellular location is the cell projection. It localises to the axon. It is found in the cytoplasm. In terms of biological role, transcriptional regulator which plays a role in the expulsion step of defecation by controlling enteric muscle-specific expression of exp-1 which is required for enteric muscle contraction. Not required for exp-1 expression in the PDA neuron. Also involved in controlling the length of the defecation cycle. This chain is Homeobox protein dsc-1, found in Caenorhabditis elegans.